Consider the following 418-residue polypeptide: MKKINLKDKEIEKIINNEQQRQEEHIELIASENYVSKDVLEATGSILTNKYSEGYPGARYYDGCEFVDQIETLAIERLKKLFNVKFANVQPHSGSSANSAAIAALVKPGGKILGMSLDAGGHLTHGYKISFSGTFYDPYFYGVNDEGLLDYDVIEKLAEKIKPELIICGASNYSRTIDFEKFSKIAKKVGAFLLADIAHIAGLIIADLHPSPVGHADVITSTTHKTIRGARGGIIMSNDETLMKKIDRWVFPGYQGGPLVHVIAGKAVAFGEALTPQFKKYQQQIISNAKAFSEEFKKVGTKIISGQTDNHLFTIDVKSSFNISGKEASELMHSINITANKNSIPNDTLGPKISSGVRMGTPAMTTRGFKEVEFKKLARIIIELLANSTSSNLESLKLKLKNEVLELTKAFPTKDYYL.

Residues L117 and 121–123 (GHL) contribute to the (6S)-5,6,7,8-tetrahydrofolate site. Position 225 is an N6-(pyridoxal phosphate)lysine (K225).

Belongs to the SHMT family. In terms of assembly, homodimer. Pyridoxal 5'-phosphate is required as a cofactor.

The protein resides in the cytoplasm. It catalyses the reaction (6R)-5,10-methylene-5,6,7,8-tetrahydrofolate + glycine + H2O = (6S)-5,6,7,8-tetrahydrofolate + L-serine. The protein operates within one-carbon metabolism; tetrahydrofolate interconversion. Its pathway is amino-acid biosynthesis; glycine biosynthesis; glycine from L-serine: step 1/1. Functionally, catalyzes the reversible interconversion of serine and glycine with tetrahydrofolate (THF) serving as the one-carbon carrier. This reaction serves as the major source of one-carbon groups required for the biosynthesis of purines, thymidylate, methionine, and other important biomolecules. Also exhibits THF-independent aldolase activity toward beta-hydroxyamino acids, producing glycine and aldehydes, via a retro-aldol mechanism. This is Serine hydroxymethyltransferase from Mycoplasma mobile (strain ATCC 43663 / 163K / NCTC 11711) (Mesomycoplasma mobile).